We begin with the raw amino-acid sequence, 41 residues long: Large ribosomal subunit protein bL36 (41 aa).

It belongs to the bacterial ribosomal protein bL36 family.

The chain is Large ribosomal subunit protein bL36 from Bartonella quintana (strain Toulouse) (Rochalimaea quintana).